We begin with the raw amino-acid sequence, 494 residues long: Putative myristoylated protein 006R (494 aa).

The N-myristoyl glycine; by host moiety is linked to residue G2. The next 3 membrane-spanning stretches (helical) occupy residues 193–213, 214–234, and 465–485; these read VAAL…GGIA, VAGR…LVVW, and WLLY…ILAF.

Belongs to the IIV-6 118L/458R family.

The protein localises to the membrane. This chain is Putative myristoylated protein 006R, found in Aedes vexans (Inland floodwater mosquito).